The sequence spans 296 residues: METVYCTFDHKLSLSDISTLCKLMNIVIPIPAHHHLIGSGNLGLYPIVSSNKDYVHIRNVLRTMVVTILQKVEGNQLVLRKPMTGQQYAIKNTGPFPWEKGDTLTLIPPLSTHSEEKLLKLGDWELTVPLVVPTAIAAEINIRLLCIGLIAVHREYNEMQTIIDELCSIQYRDVLIKLPDIVNDKQSMYSMKTACISLSMITAMAPDIVRTYIDRLTLEDHSMLLIKCQELLSKRTTLSTQRCGQLHATDIKDELKKIKSVLTMIDQINSLTNEKTYFVVCDVSADNRMATCIYKN.

It belongs to the herpesviridae TRX2 protein family. In terms of assembly, interacts with TRX1 and major capisd protein/MCP.

The protein localises to the virion. It localises to the host nucleus. Structural component of the T=16 icosahedral capsid. The capsid is composed of pentamers and hexamers of major capsid protein/MCP, which are linked together by heterotrimers called triplexes. These triplexes are formed by a single molecule of triplex protein 1/TRX1 and two copies of triplex protein 2/TRX2. Additionally, TRX1 is required for efficient transport of TRX2 to the nucleus, which is the site of capsid assembly. This Homo sapiens (Human) protein is Triplex capsid protein 2.